Consider the following 495-residue polypeptide: Probable cytosol aminopeptidase (495 aa).

Lys261 and Asp266 together coordinate Mn(2+). Lys273 is a catalytic residue. Residues Asp284, Asp343, and Glu345 each contribute to the Mn(2+) site. The active site involves Arg347.

Belongs to the peptidase M17 family. The cofactor is Mn(2+).

It localises to the cytoplasm. The catalysed reaction is Release of an N-terminal amino acid, Xaa-|-Yaa-, in which Xaa is preferably Leu, but may be other amino acids including Pro although not Arg or Lys, and Yaa may be Pro. Amino acid amides and methyl esters are also readily hydrolyzed, but rates on arylamides are exceedingly low.. The enzyme catalyses Release of an N-terminal amino acid, preferentially leucine, but not glutamic or aspartic acids.. In terms of biological role, presumably involved in the processing and regular turnover of intracellular proteins. Catalyzes the removal of unsubstituted N-terminal amino acids from various peptides. The polypeptide is Probable cytosol aminopeptidase (Chelativorans sp. (strain BNC1)).